The chain runs to 478 residues: Lysine-rich nucleolar protein 1 (478 aa).

Residues 1 to 231 (MVSKTQKADL…THQEGDILLV (231 aa)) are disordered. Lys-7 is covalently cross-linked (Glycyl lysine isopeptide (Lys-Gly) (interchain with G-Cter in SUMO2)). A compositionally biased stretch (basic residues) spans 17–27 (KKKKKKKKKRV). Positions 33–45 (EPETQYSVLNSND) are enriched in polar residues. Ser-51 and Ser-59 each carry phosphoserine. Residues 54-63 (RATSPSNNVD) are compositionally biased toward polar residues. Composition is skewed to basic residues over residues 73–82 (SKRKKKKKSC) and 120–129 (EKKKKRRKSL). Lys-140 participates in a covalent cross-link: Glycyl lysine isopeptide (Lys-Gly) (interchain with G-Cter in SUMO2). Ser-142 carries the post-translational modification Phosphoserine. Basic and acidic residues predominate over residues 143–153 (PDPKHAKEVSK). Basic residues-rich tracts occupy residues 154-165 (AGRKSKKQRKEK) and 204-222 (QKRK…KKKT). A Glycyl lysine isopeptide (Lys-Gly) (interchain with G-Cter in SUMO1); alternate cross-link involves residue Lys-250. A Glycyl lysine isopeptide (Lys-Gly) (interchain with G-Cter in SUMO2); alternate cross-link involves residue Lys-250. The tract at residues 258–314 (PIDSPKAPGKKKVKSKKKVEQPVGEGLAVKRKKKKKKRKENGVKEDPWQEEKEESDT) is disordered. A Phosphoserine modification is found at Ser-261. Basic residues predominate over residues 265–274 (PGKKKVKSKK). Residues Lys-275 and Lys-287 each participate in a glycyl lysine isopeptide (Lys-Gly) (interchain with G-Cter in SUMO2) cross-link. Residues 286–296 (VKRKKKKKKRK) show a composition bias toward basic residues. Basic and acidic residues predominate over residues 297 to 307 (ENGVKEDPWQE). Lys-309 participates in a covalent cross-link: Glycyl lysine isopeptide (Lys-Gly) (interchain with G-Cter in SUMO2). The tract at residues 310–478 (EESDTDLEVV…NASKSIKLQD (169 aa)) is interaction with ZNF106. Ser-312 carries the phosphoserine modification. A Phosphothreonine modification is found at Thr-314. Lys-323 participates in a covalent cross-link: Glycyl lysine isopeptide (Lys-Gly) (interchain with G-Cter in SUMO2). Residues 340–357 (QEEIDRESGKTEASEPKK) show a composition bias toward basic and acidic residues. Residues 340-378 (QEEIDRESGKTEASEPKKWTVGLSVKTEASEPKKWTGTQ) form a disordered region. Residues Lys-373, Lys-393, Lys-395, Lys-427, and Lys-462 each participate in a glycyl lysine isopeptide (Lys-Gly) (interchain with G-Cter in SUMO2) cross-link.

As to quaternary structure, interacts with ZNF106. As to expression, expressed in testis.

Its subcellular location is the nucleus. The protein localises to the nucleolus. The chain is Lysine-rich nucleolar protein 1 (Knop1) from Mus musculus (Mouse).